The sequence spans 542 residues: CTP synthase (542 aa).

An amidoligase domain region spans residues 1–264 (MKFIFITGGV…AKLIINKLKL (264 aa)). S12 is a binding site for CTP. S12 provides a ligand contact to UTP. 13 to 18 (SLGKGI) serves as a coordination point for ATP. L-glutamine is bound at residue Y53. Residue D70 participates in ATP binding. Mg(2+) contacts are provided by D70 and E138. Residues 145–147 (DIE), 185–190 (KTKPTQ), and K221 contribute to the CTP site. UTP contacts are provided by residues 185 to 190 (KTKPTQ) and K221. 237–239 (KDA) is a binding site for ATP. The Glutamine amidotransferase type-1 domain occupies 298–541 (YIMLKDAYTS…VKSALDKKLK (244 aa)). G359 serves as a coordination point for L-glutamine. C386 (nucleophile; for glutamine hydrolysis) is an active-site residue. L-glutamine contacts are provided by residues 387 to 390 (LGMQ), E410, and R467. Catalysis depends on residues H514 and E516.

The protein belongs to the CTP synthase family. Homotetramer.

The enzyme catalyses UTP + L-glutamine + ATP + H2O = CTP + L-glutamate + ADP + phosphate + 2 H(+). It catalyses the reaction L-glutamine + H2O = L-glutamate + NH4(+). It carries out the reaction UTP + NH4(+) + ATP = CTP + ADP + phosphate + 2 H(+). Its pathway is pyrimidine metabolism; CTP biosynthesis via de novo pathway; CTP from UDP: step 2/2. Its activity is regulated as follows. Allosterically activated by GTP, when glutamine is the substrate; GTP has no effect on the reaction when ammonia is the substrate. The allosteric effector GTP functions by stabilizing the protein conformation that binds the tetrahedral intermediate(s) formed during glutamine hydrolysis. Inhibited by the product CTP, via allosteric rather than competitive inhibition. Its function is as follows. Catalyzes the ATP-dependent amination of UTP to CTP with either L-glutamine or ammonia as the source of nitrogen. Regulates intracellular CTP levels through interactions with the four ribonucleotide triphosphates. This is CTP synthase from Methanococcus aeolicus (strain ATCC BAA-1280 / DSM 17508 / OCM 812 / Nankai-3).